Here is a 239-residue protein sequence, read N- to C-terminus: Adenylate kinase 2 (239 aa).

29-34 (GSGKGT) contacts ATP. Positions 49 to 78 (STGDILRAIIASGSELGQKVQKITESGGLV) are NMP. Residues threonine 50, arginine 55, 76–78 (GLV), 104–107 (GFPR), and glutamine 111 contribute to the AMP site. The interval 145-182 (GRLFHLASGRSYHELFNPPKVPMVDDITGDRLVHRSDD) is LID. Residues arginine 146 and 155 to 156 (SY) each bind ATP. 2 residues coordinate AMP: arginine 179 and arginine 190.

It belongs to the adenylate kinase family. AK2 subfamily. In terms of assembly, monomer. Requires Mg(2+) as cofactor.

The protein localises to the cytoplasm. It is found in the cytosol. The catalysed reaction is AMP + ATP = 2 ADP. It functions in the pathway purine metabolism; purine nucleotide biosynthesis. Catalyzes the reversible transfer of the terminal phosphate group between ATP and AMP. Plays an important role in cellular energy homeostasis and in adenine nucleotide metabolism. This is Adenylate kinase 2 from Schistosoma mansoni (Blood fluke).